A 149-amino-acid chain; its full sequence is Probable flagellum biosynthesis repressor protein FlbT (149 aa).

It belongs to the FlbT family.

In terms of biological role, has a post-transcriptional repressor function in flagellum biogenesis. Associates with the 5'-UTR of fljK mRNA and promotes its degradation. The polypeptide is Probable flagellum biosynthesis repressor protein FlbT (Allorhizobium ampelinum (strain ATCC BAA-846 / DSM 112012 / S4) (Agrobacterium vitis (strain S4))).